Here is a 214-residue protein sequence, read N- to C-terminus: Adenylate kinase (214 aa).

Residue 10–15 (GAGKGT) coordinates ATP. Residues 30–59 (STGDMLRAAVKAGTELGKQAKEIMDAGKLV) form an NMP region. AMP is bound by residues Thr31, Arg36, 57–59 (KLV), 85–88 (GFPR), and Gln92. Residues 122 to 159 (GRRVHAASGRVYHVKFNPPKVEDKDDVTGEDLSVRKDD) are LID. Residues Arg123 and 132-133 (VY) contribute to the ATP site. AMP contacts are provided by Arg156 and Arg167. Residue Arg200 coordinates ATP.

It belongs to the adenylate kinase family. Monomer.

The protein resides in the cytoplasm. It carries out the reaction AMP + ATP = 2 ADP. The protein operates within purine metabolism; AMP biosynthesis via salvage pathway; AMP from ADP: step 1/1. Functionally, catalyzes the reversible transfer of the terminal phosphate group between ATP and AMP. Plays an important role in cellular energy homeostasis and in adenine nucleotide metabolism. This is Adenylate kinase from Pectobacterium atrosepticum (strain SCRI 1043 / ATCC BAA-672) (Erwinia carotovora subsp. atroseptica).